The following is an 82-amino-acid chain: Sec-independent protein translocase protein TatA (82 aa).

The helical transmembrane segment at 1–21 (MGIFDWKHWIVILIVVVLVFG) threads the bilayer. The interval 43 to 82 (VNTEEDDKKDQPAAQPAQPLNQPHTIDAQAQKVEEPARKD) is disordered.

Belongs to the TatA/E family. In terms of assembly, the Tat system comprises two distinct complexes: a TatABC complex, containing multiple copies of TatA, TatB and TatC subunits, and a separate TatA complex, containing only TatA subunits. Substrates initially bind to the TatABC complex, which probably triggers association of the separate TatA complex to form the active translocon.

It localises to the cell inner membrane. Functionally, part of the twin-arginine translocation (Tat) system that transports large folded proteins containing a characteristic twin-arginine motif in their signal peptide across membranes. TatA could form the protein-conducting channel of the Tat system. This Pseudomonas aeruginosa (strain LESB58) protein is Sec-independent protein translocase protein TatA.